A 220-amino-acid polypeptide reads, in one-letter code: Elongation factor Ts, chloroplastic (220 aa).

Belongs to the EF-Ts family.

Its subcellular location is the plastid. It localises to the chloroplast. In terms of biological role, associates with the EF-Tu.GDP complex and induces the exchange of GDP to GTP. It remains bound to the aminoacyl-tRNA.EF-Tu.GTP complex up to the GTP hydrolysis stage on the ribosome. This Porphyra purpurea (Red seaweed) protein is Elongation factor Ts, chloroplastic (tsf).